Consider the following 315-residue polypeptide: Probable cell division protein WhiA (315 aa).

Residues 278–312 (SLSDLAGMIEGQELTKSGINHRMRKLMQIVKELNH) constitute a DNA-binding region (H-T-H motif).

It belongs to the WhiA family.

In terms of biological role, involved in cell division and chromosome segregation. The polypeptide is Probable cell division protein WhiA (Oenococcus oeni (strain ATCC BAA-331 / PSU-1)).